The primary structure comprises 461 residues: 26S proteasome regulatory subunit 8 (461 aa).

Residue 185–192 (GPPGTGKT) coordinates ATP.

This sequence belongs to the AAA ATPase family.

It is found in the cytoplasm. It localises to the nucleus. The 26S proteasome is involved in the ATP-dependent degradation of ubiquitinated proteins. The regulatory (or ATPase) complex confers ATP dependency and substrate specificity to the 26S complex. In Xenopus laevis (African clawed frog), this protein is 26S proteasome regulatory subunit 8 (psmc5).